We begin with the raw amino-acid sequence, 413 residues long: Glutamyl-tRNA reductase (413 aa).

Residues 49–52 (TCNR), Ser-105, 110–112 (EPQ), and Gln-116 contribute to the substrate site. The active-site Nucleophile is Cys-50. An NADP(+)-binding site is contributed by 185–190 (GAGETI).

This sequence belongs to the glutamyl-tRNA reductase family. In terms of assembly, homodimer.

It catalyses the reaction (S)-4-amino-5-oxopentanoate + tRNA(Glu) + NADP(+) = L-glutamyl-tRNA(Glu) + NADPH + H(+). It participates in porphyrin-containing compound metabolism; protoporphyrin-IX biosynthesis; 5-aminolevulinate from L-glutamyl-tRNA(Glu): step 1/2. Catalyzes the NADPH-dependent reduction of glutamyl-tRNA(Glu) to glutamate 1-semialdehyde (GSA). In Coxiella burnetii (strain Dugway 5J108-111), this protein is Glutamyl-tRNA reductase.